The chain runs to 427 residues: 3-phosphoshikimate 1-carboxyvinyltransferase (427 aa).

3 residues coordinate 3-phosphoshikimate: Lys22, Ser23, and Arg27. Position 22 (Lys22) interacts with phosphoenolpyruvate. Phosphoenolpyruvate contacts are provided by Gly94 and Arg122. Residues Ser165, Gln167, Asp313, and Lys340 each contribute to the 3-phosphoshikimate site. Phosphoenolpyruvate is bound at residue Gln167. Residue Asp313 is the Proton acceptor of the active site. Arg344 and Arg386 together coordinate phosphoenolpyruvate.

The protein belongs to the EPSP synthase family. As to quaternary structure, monomer.

Its subcellular location is the cytoplasm. It carries out the reaction 3-phosphoshikimate + phosphoenolpyruvate = 5-O-(1-carboxyvinyl)-3-phosphoshikimate + phosphate. The protein operates within metabolic intermediate biosynthesis; chorismate biosynthesis; chorismate from D-erythrose 4-phosphate and phosphoenolpyruvate: step 6/7. Catalyzes the transfer of the enolpyruvyl moiety of phosphoenolpyruvate (PEP) to the 5-hydroxyl of shikimate-3-phosphate (S3P) to produce enolpyruvyl shikimate-3-phosphate and inorganic phosphate. This is 3-phosphoshikimate 1-carboxyvinyltransferase from Koribacter versatilis (strain Ellin345).